The primary structure comprises 304 residues: MQKFDTKTFQGLILTLQDYWARQGCTIVQPLDMEVGAGTSHPITCLRALGPEPIAAAYVQPSRRPTDGRYGENPNRLQHYYQFQVIIKPSPDNIQELYLDSLKALGLDPTVHDIRFVEDNWENPTLGAWGLGWEVWLNGMEVTQFTYFQQVGGLECKPVTGEITYGLERLAMYIQGVDSVYDLVWCDGPLGKTTYGDIYHQNEVEQSTYNFEHADVDFLFTCFEQYEKEAQDLLALETPLPLPAYERILKAGHTFNLLDARKAISVTERQRYILRIRTLTKAVAEAYYASREALGFPMCNKNQN.

Belongs to the class-II aminoacyl-tRNA synthetase family. In terms of assembly, tetramer of two alpha and two beta subunits.

Its subcellular location is the cytoplasm. It catalyses the reaction tRNA(Gly) + glycine + ATP = glycyl-tRNA(Gly) + AMP + diphosphate. The protein is Glycine--tRNA ligase alpha subunit of Photorhabdus laumondii subsp. laumondii (strain DSM 15139 / CIP 105565 / TT01) (Photorhabdus luminescens subsp. laumondii).